Here is a 223-residue protein sequence, read N- to C-terminus: Deoxyribose-phosphate aldolase (223 aa).

The Proton donor/acceptor role is filled by D89. K152 functions as the Schiff-base intermediate with acetaldehyde in the catalytic mechanism. Residue K181 is the Proton donor/acceptor of the active site.

This sequence belongs to the DeoC/FbaB aldolase family. DeoC type 1 subfamily.

It localises to the cytoplasm. The enzyme catalyses 2-deoxy-D-ribose 5-phosphate = D-glyceraldehyde 3-phosphate + acetaldehyde. The protein operates within carbohydrate degradation; 2-deoxy-D-ribose 1-phosphate degradation; D-glyceraldehyde 3-phosphate and acetaldehyde from 2-deoxy-alpha-D-ribose 1-phosphate: step 2/2. Catalyzes a reversible aldol reaction between acetaldehyde and D-glyceraldehyde 3-phosphate to generate 2-deoxy-D-ribose 5-phosphate. This Bacillus cereus (strain ATCC 14579 / DSM 31 / CCUG 7414 / JCM 2152 / NBRC 15305 / NCIMB 9373 / NCTC 2599 / NRRL B-3711) protein is Deoxyribose-phosphate aldolase.